A 392-amino-acid chain; its full sequence is Galactokinase (392 aa).

Residues R37, E43, H44, and D46 each contribute to the alpha-D-galactose site. ATP is bound by residues G136, G138, S140, and S141. D186 is an alpha-D-galactose binding site. D186 acts as the Proton acceptor in catalysis. At S230 the chain carries Phosphoserine. Y236 provides a ligand contact to alpha-D-galactose.

Belongs to the GHMP kinase family. GalK subfamily. In terms of assembly, homodimer.

The enzyme catalyses alpha-D-galactose + ATP = alpha-D-galactose 1-phosphate + ADP + H(+). The protein operates within carbohydrate metabolism; galactose metabolism. In terms of biological role, catalyzes the transfer of a phosphate from ATP to alpha-D-galactose and participates in the first committed step in the catabolism of galactose. The chain is Galactokinase from Homo sapiens (Human).